Reading from the N-terminus, the 644-residue chain is Transcription factor cep-1 (644 aa).

A DNA-binding region spans residues 223 to 418; the sequence is EKWMEIDVLK…NFCEREDAKQ (196 aa). Residues C307, H310, C361, and C365 each coordinate Zn(2+). The interval 528-555 is required for tertiary structure stability of the protein; sequence TNYSFRTLTLSTAEYTKVVEFLAREAKV.

It belongs to the p53 family. Homodimer. Interacts (via C-terminus domain) with prmt-5; not methylated by prmt-5. Interacts with cbp-1 (via HAT domain); cep-1 transcriptional activity may be inhibited by interaction with methylated cbp-1. Component of a complex that contains prmt-5 and cbp-1. Interacts with ape-1; the interaction inhibits pro-apoptotic activity of cep-1. Requires Zn(2+) as cofactor. Phosphorylated in response to IR-induced DNA damage which is thought to be mediated by akt-1. As to expression, expressed in pharyngeal muscle and neurons.

It localises to the nucleus. Transcriptional activator that binds the same DNA consensus sequence as p53. Has a role in normal development to ensure proper meiotic chromosome segregation. Promotes apoptosis under conditions of cellular and genotoxic stress in response to DNA damage, hypoxia, or starvation. Regulates germline apoptosis in response to DNA damage. Its pro-apoptotic activity is inhibited when bound to ape-1 in vitro. Plays a role in cell cycle arrest in the germline in response to DNA damage by UV-C light. However, not required for survival in response to DNA damage induced by UV-C light, indicating that it is unlikely to be involved in DNA repair. Required for induction of ced-13 in response to DNA damage. Regulates DNA damage-induced apoptosis by inducing transcription of the programmed cell death activator egl-1. Regulates germline proliferation by activating phg-1. Modulates lifespan. This is Transcription factor cep-1 from Caenorhabditis elegans.